The primary structure comprises 259 residues: Probable UMP-CMP kinase 2 (259 aa).

63–68 (GSGKGT) is an ATP binding site. Residues 83–112 (SAGDLLRREIAMHTENGAMILNLIKDGKIV) form an NMP region. Residues arginine 89, 110-112 (KIV), and 137-140 (GFPR) each bind a ribonucleoside 5'-phosphate. Asparagine 144 is a CMP binding site. The tract at residues 175–183 (NRNQGRIDD) is LID. Arginine 176 is an ATP binding site. A ribonucleoside 5'-phosphate contacts are provided by arginine 180 and arginine 191. Glycine 219 contacts ATP.

The protein belongs to the adenylate kinase family. UMP-CMP kinase subfamily. Monomer. The cofactor is Mg(2+).

The protein resides in the cytoplasm. Its subcellular location is the nucleus. It catalyses the reaction CMP + ATP = CDP + ADP. It carries out the reaction dCMP + ATP = dCDP + ADP. The enzyme catalyses UMP + ATP = UDP + ADP. Its function is as follows. Catalyzes the phosphorylation of pyrimidine nucleoside monophosphates at the expense of ATP. Plays an important role in de novo pyrimidine nucleotide biosynthesis. Has preference for UMP and CMP as phosphate acceptors. The polypeptide is Probable UMP-CMP kinase 2 (UMK2) (Arabidopsis thaliana (Mouse-ear cress)).